The sequence spans 158 residues: NAD(P)H-quinone oxidoreductase subunit J, chloroplastic (158 aa).

Belongs to the complex I 30 kDa subunit family. NDH is composed of at least 16 different subunits, 5 of which are encoded in the nucleus.

The protein localises to the plastid. It localises to the chloroplast thylakoid membrane. The catalysed reaction is a plastoquinone + NADH + (n+1) H(+)(in) = a plastoquinol + NAD(+) + n H(+)(out). The enzyme catalyses a plastoquinone + NADPH + (n+1) H(+)(in) = a plastoquinol + NADP(+) + n H(+)(out). NDH shuttles electrons from NAD(P)H:plastoquinone, via FMN and iron-sulfur (Fe-S) centers, to quinones in the photosynthetic chain and possibly in a chloroplast respiratory chain. The immediate electron acceptor for the enzyme in this species is believed to be plastoquinone. Couples the redox reaction to proton translocation, and thus conserves the redox energy in a proton gradient. The polypeptide is NAD(P)H-quinone oxidoreductase subunit J, chloroplastic (Nicotiana tabacum (Common tobacco)).